The following is an 862-amino-acid chain: Protein translocase subunit SecA (862 aa).

Residues Gln88, 106–110, and Asp506 each bind ATP; that span reads GEGKT. Cys839, Cys841, Cys850, and His851 together coordinate Zn(2+).

It belongs to the SecA family. As to quaternary structure, monomer and homodimer. Part of the essential Sec protein translocation apparatus which comprises SecA, SecYEG and auxiliary proteins SecDF-YajC and YidC. Requires Zn(2+) as cofactor.

Its subcellular location is the cell inner membrane. It localises to the cytoplasm. The enzyme catalyses ATP + H2O + cellular proteinSide 1 = ADP + phosphate + cellular proteinSide 2.. Its function is as follows. Part of the Sec protein translocase complex. Interacts with the SecYEG preprotein conducting channel. Has a central role in coupling the hydrolysis of ATP to the transfer of proteins into and across the cell membrane, serving as an ATP-driven molecular motor driving the stepwise translocation of polypeptide chains across the membrane. The protein is Protein translocase subunit SecA of Campylobacter jejuni subsp. doylei (strain ATCC BAA-1458 / RM4099 / 269.97).